The chain runs to 2360 residues: DNA (cytosine-5-)-methyltransferase DMT5 (2360 aa).

An SAM-dependent MTase C5-type domain is found at 48–507 (FTVGTMCSGT…LCILIAERQV (460 aa)). Cysteine 146 is an active-site residue. The Helicase ATP-binding domain occupies 1258 to 1575 (AEVVNRARGG…CAIADLVNMH (318 aa)). Position 1271 to 1278 (1271 to 1278 (HDVGFGKT)) interacts with ATP. Residues 1451-1498 (SRRKDQKSKATARTQRAKKKSKKPRRTAAAAAESDHSAESDSDSAMDD) form a disordered region. A compositionally biased stretch (basic residues) spans 1465 to 1476 (QRAKKKSKKPRR). The RING-type; degenerate zinc-finger motif lies at 2018–2070 (CSVCGSQDNTEMKDLSLFITCGHLLCSGCVAAHEHQHGQAESTTGEVLCPVDS). The region spanning 2102 to 2267 (KVMKILDVIR…RMPLDDLDYK (166 aa)) is the Helicase C-terminal domain.

The protein in the N-terminal section; belongs to the class I-like SAM-binding methyltransferase superfamily. C5-methyltransferase family. It in the C-terminal section; belongs to the SNF2/RAD54 helicase family.

Its subcellular location is the nucleus. The protein resides in the chromosome. It carries out the reaction a 2'-deoxycytidine in DNA + S-adenosyl-L-methionine + ATP + H2O = a 5-methyl-2'-deoxycytidine in DNA + S-adenosyl-L-homocysteine + ADP + phosphate + 2 H(+). Functionally, may play a role in cytosine methylation at palindromic 5'-CG-3' and 5'-C[ACT]G-3' sites in DNA. In Verticillium dahliae (strain VdLs.17 / ATCC MYA-4575 / FGSC 10137) (Verticillium wilt), this protein is DNA (cytosine-5-)-methyltransferase DMT5.